The chain runs to 1906 residues: A disintegrin and metalloproteinase with thrombospondin motifs 20 (1906 aa).

A signal peptide spans methionine 1–phenylalanine 26. A propeptide spanning residues histidine 27–arginine 249 is cleaved from the precursor. 2 N-linked (GlcNAc...) asparagine glycosylation sites follow: asparagine 92 and asparagine 221. The tract at residues proline 201–threonine 222 is disordered. Residues arginine 255–proline 464 form the Peptidase M12B domain. Disulfide bonds link cysteine 330-cysteine 383, cysteine 359-cysteine 365, cysteine 377-cysteine 459, cysteine 415-cysteine 443, cysteine 486-cysteine 508, cysteine 497-cysteine 518, cysteine 503-cysteine 537, cysteine 531-cysteine 542, cysteine 565-cysteine 602, cysteine 569-cysteine 607, and cysteine 580-cysteine 592. Histidine 399 is a Zn(2+) binding site. Glutamate 400 is an active-site residue. Zn(2+) contacts are provided by histidine 403 and histidine 409. The 88-residue stretch at asparagine 465–valine 552 folds into the Disintegrin domain. Residues aspartate 553–proline 608 enclose the TSP type-1 1 domain. N-linked (GlcNAc...) asparagine glycosylation is found at asparagine 714, asparagine 798, and asparagine 805. A spacer region spans residues alanine 721 to asparagine 842. 7 consecutive TSP type-1 domains span residues leucine 843–glutamate 901, isoleucine 906–valine 962, valine 962–glutamate 1015, proline 1017–alanine 1074, serine 1075–leucine 1131, arginine 1148–serine 1202, and proline 1203–proline 1260. Residue asparagine 1057 is glycosylated (N-linked (GlcNAc...) asparagine). The segment at arginine 1265–alanine 1295 is disordered. Residues alanine 1266–proline 1277 show a composition bias toward polar residues. 7 consecutive TSP type-1 domains span residues arginine 1300 to glycine 1351, proline 1354 to proline 1411, glutamate 1412 to arginine 1465, arginine 1468 to methionine 1526, arginine 1527 to lysine 1584, tyrosine 1585 to cysteine 1648, and histidine 1650 to lysine 1706. Asparagine 1562 is a glycosylation site (N-linked (GlcNAc...) asparagine). Positions leucine 1707–leucine 1906 constitute a GON domain. 3 N-linked (GlcNAc...) asparagine glycosylation sites follow: asparagine 1719, asparagine 1759, and asparagine 1777.

Zn(2+) is required as a cofactor. The precursor is cleaved by a furin endopeptidase. Post-translationally, glycosylated. Can be O-fucosylated by POFUT2 on a serine or a threonine residue found within the consensus sequence C1-X(2)-(S/T)-C2-G of the TSP type-1 repeat domains where C1 and C2 are the first and second cysteine residue of the repeat, respectively. Fucosylated repeats can then be further glycosylated by the addition of a beta-1,3-glucose residue by the glucosyltransferase, B3GALTL. Fucosylation mediates the efficient secretion of ADAMTS family members. Can also be C-glycosylated with one or two mannose molecules on tryptophan residues within the consensus sequence W-X-X-W of the TPRs, and N-glycosylated. These other glycosylations can also facilitate secretion. In terms of tissue distribution, expressed at low level in testis and brain.

It is found in the secreted. The protein localises to the extracellular space. The protein resides in the extracellular matrix. Its function is as follows. May play a role in tissue-remodeling process occurring in both normal and pathological conditions. May have a protease-independent function in the transport from the endoplasmic reticulum to the Golgi apparatus of secretory cargos, mediated by the GON domain. This chain is A disintegrin and metalloproteinase with thrombospondin motifs 20 (Adamts20), found in Mus musculus (Mouse).